The following is a 274-amino-acid chain: MAFSGHHARKRFGQHWLKDESVLQRIVAAAALQPDDHVLEVGPGRGALTAQLLASPAASVQAVELDRDLVAGLQQRFAAEPRFQLQSGDVLALPQLGDGERRPTKVVANIPYNITGPLLERLVGRLDRPVEPPYQRLVLLVQQEVARRISARAGQSSFSALSVRMQLLAHCRSVCPVPPRCFQPPPKVQSEVISLDPLPADQRPPQAVAKQVEHLLRLAFSARRKMVRNTLASAAPAVGLEVWLADAGLTPQQRPQEIAAQQWVALAAALQPAL.

Histidine 15, leucine 17, glycine 42, glutamate 64, aspartate 89, and asparagine 109 together coordinate S-adenosyl-L-methionine.

It belongs to the class I-like SAM-binding methyltransferase superfamily. rRNA adenine N(6)-methyltransferase family. RsmA subfamily.

It localises to the cytoplasm. It catalyses the reaction adenosine(1518)/adenosine(1519) in 16S rRNA + 4 S-adenosyl-L-methionine = N(6)-dimethyladenosine(1518)/N(6)-dimethyladenosine(1519) in 16S rRNA + 4 S-adenosyl-L-homocysteine + 4 H(+). Its function is as follows. Specifically dimethylates two adjacent adenosines (A1518 and A1519) in the loop of a conserved hairpin near the 3'-end of 16S rRNA in the 30S particle. May play a critical role in biogenesis of 30S subunits. In Synechococcus sp. (strain RCC307), this protein is Ribosomal RNA small subunit methyltransferase A.